Consider the following 283-residue polypeptide: Formamidopyrimidine-DNA glycosylase (283 aa).

P2 acts as the Schiff-base intermediate with DNA in catalysis. E3 functions as the Proton donor in the catalytic mechanism. K58 functions as the Proton donor; for beta-elimination activity in the catalytic mechanism. 3 residues coordinate DNA: H100, R119, and R162. An FPG-type zinc finger spans residues 247–283 (DVYGREGEPCRRAGCTGTVTRITQSGRSSFYCGKCQR). The Proton donor; for delta-elimination activity role is filled by R273.

The protein belongs to the FPG family. In terms of assembly, monomer. It depends on Zn(2+) as a cofactor.

The catalysed reaction is Hydrolysis of DNA containing ring-opened 7-methylguanine residues, releasing 2,6-diamino-4-hydroxy-5-(N-methyl)formamidopyrimidine.. The enzyme catalyses 2'-deoxyribonucleotide-(2'-deoxyribose 5'-phosphate)-2'-deoxyribonucleotide-DNA = a 3'-end 2'-deoxyribonucleotide-(2,3-dehydro-2,3-deoxyribose 5'-phosphate)-DNA + a 5'-end 5'-phospho-2'-deoxyribonucleoside-DNA + H(+). Involved in base excision repair of DNA damaged by oxidation or by mutagenic agents. Acts as a DNA glycosylase that recognizes and removes damaged bases. Has a preference for oxidized purines, such as 7,8-dihydro-8-oxoguanine (8-oxoG). Has AP (apurinic/apyrimidinic) lyase activity and introduces nicks in the DNA strand. Cleaves the DNA backbone by beta-delta elimination to generate a single-strand break at the site of the removed base with both 3'- and 5'-phosphates. The protein is Formamidopyrimidine-DNA glycosylase of Ruegeria sp. (strain TM1040) (Silicibacter sp.).